We begin with the raw amino-acid sequence, 168 residues long: Chorismate pyruvate-lyase (168 aa).

Substrate contacts are provided by Met-36, Arg-78, Leu-116, and Glu-157.

It belongs to the UbiC family. In terms of assembly, monomer.

Its subcellular location is the cytoplasm. The catalysed reaction is chorismate = 4-hydroxybenzoate + pyruvate. The protein operates within cofactor biosynthesis; ubiquinone biosynthesis. In terms of biological role, removes the pyruvyl group from chorismate, with concomitant aromatization of the ring, to provide 4-hydroxybenzoate (4HB) for the ubiquinone pathway. The sequence is that of Chorismate pyruvate-lyase from Photorhabdus laumondii subsp. laumondii (strain DSM 15139 / CIP 105565 / TT01) (Photorhabdus luminescens subsp. laumondii).